Reading from the N-terminus, the 1004-residue chain is 2-oxoglutarate dehydrogenase E1 component (1004 aa).

It belongs to the alpha-ketoglutarate dehydrogenase family. As to quaternary structure, homodimer. Part of the 2-oxoglutarate dehydrogenase (OGDH) complex composed of E1 (2-oxoglutarate dehydrogenase), E2 (dihydrolipoamide succinyltransferase) and E3 (dihydrolipoamide dehydrogenase); the complex contains multiple copies of the three enzymatic components (E1, E2 and E3). Thiamine diphosphate serves as cofactor.

The enzyme catalyses N(6)-[(R)-lipoyl]-L-lysyl-[protein] + 2-oxoglutarate + H(+) = N(6)-[(R)-S(8)-succinyldihydrolipoyl]-L-lysyl-[protein] + CO2. Functionally, E1 component of the 2-oxoglutarate dehydrogenase (OGDH) complex which catalyzes the decarboxylation of 2-oxoglutarate, the first step in the conversion of 2-oxoglutarate to succinyl-CoA and CO(2). In Brucella suis biovar 1 (strain 1330), this protein is 2-oxoglutarate dehydrogenase E1 component.